Consider the following 91-residue polypeptide: DNA-directed RNA polymerase subunit omega (91 aa).

It belongs to the RNA polymerase subunit omega family. In terms of assembly, the RNAP catalytic core consists of 2 alpha, 1 beta, 1 beta' and 1 omega subunit. When a sigma factor is associated with the core the holoenzyme is formed, which can initiate transcription.

The enzyme catalyses RNA(n) + a ribonucleoside 5'-triphosphate = RNA(n+1) + diphosphate. Promotes RNA polymerase assembly. Latches the N- and C-terminal regions of the beta' subunit thereby facilitating its interaction with the beta and alpha subunits. The sequence is that of DNA-directed RNA polymerase subunit omega from Edwardsiella ictaluri (strain 93-146).